The sequence spans 404 residues: WD repeat and SOCS box-containing protein 2 (404 aa).

7 WD repeats span residues 16–55 (GRPH…LIPW), 81–140 (GSPK…IWEV), 144–183 (LLLL…IWDL), 188–226 (KQIQ…LWSM), 230–268 (TLIR…MWDP), 283–322 (DPAM…IWAL), and 325–362 (KTPI…FWTA). The disordered stretch occupies residues 68–87 (AKSRSSKNETKGRGSPKEKT). Residues 356 to 404 (HVQFWTAPRVLSSLKHLCRKALRSFLTTYQVLALPIPKKMKEFLTYRTF) enclose the SOCS box domain.

It participates in protein modification; protein ubiquitination. Its function is as follows. May be a substrate-recognition component of a SCF-like ECS (Elongin-Cullin-SOCS-box protein) E3 ubiquitin ligase complex which mediates the ubiquitination and subsequent proteasomal degradation of target proteins. The chain is WD repeat and SOCS box-containing protein 2 (WSB2) from Homo sapiens (Human).